The following is a 709-amino-acid chain: Phosphomethylpyrimidine synthase (709 aa).

Polar residues predominate over residues 1–13; sequence MNIRSNPDTTLPA. Disordered regions lie at residues 1–21 and 125–168; these read MNIR…PLPS and DAPA…GREQ. Substrate-binding positions include N274, M303, Y332, H368, 388-390, 429-432, and E468; these read SRG and DGLR. Position 472 (H472) interacts with Zn(2+). Y495 contacts substrate. H536 is a Zn(2+) binding site. [4Fe-4S] cluster-binding residues include C616, C619, and C624.

It belongs to the ThiC family. Homodimer. Requires [4Fe-4S] cluster as cofactor.

The enzyme catalyses 5-amino-1-(5-phospho-beta-D-ribosyl)imidazole + S-adenosyl-L-methionine = 4-amino-2-methyl-5-(phosphooxymethyl)pyrimidine + CO + 5'-deoxyadenosine + formate + L-methionine + 3 H(+). Its pathway is cofactor biosynthesis; thiamine diphosphate biosynthesis. Functionally, catalyzes the synthesis of the hydroxymethylpyrimidine phosphate (HMP-P) moiety of thiamine from aminoimidazole ribotide (AIR) in a radical S-adenosyl-L-methionine (SAM)-dependent reaction. The protein is Phosphomethylpyrimidine synthase of Rhodopseudomonas palustris (strain BisB18).